The sequence spans 411 residues: Putative metal tolerance protein C3 (411 aa).

Residues 1–115 lie on the Cytoplasmic side of the membrane; it reads MEVNYCPETP…DRAERAAQEL (115 aa). A helical transmembrane segment spans residues 116–136; that stretch reads AMQISNWANIFLLALKIYATV. The Vacuolar portion of the chain corresponds to 137 to 140; sequence KSGS. A helical membrane pass occupies residues 141-161; it reads IAIAASTLDSLLDLMAGGILW. Topologically, residues 162–184 are cytoplasmic; it reads FTHLSMKNVNIYKYPIGKLRVQP. Residues 185–205 form a helical membrane-spanning segment; it reads VGIIIFAAVMATLGFQVLLVA. At 206–222 the chain is on the vacuolar side; it reads AEQLISNEPSEKMNHVQ. The helical transmembrane segment at 223-243 threads the bilayer; that stretch reads LIWLYSIMLSATAIKLVLWIY. At 244-262 the chain is on the cytoplasmic side; sequence CKSSRNHIVRAYAKDHHFD. Residues 263–283 form a helical membrane-spanning segment; the sequence is VVTNVLGLVAAVLANAFYWWL. The Vacuolar segment spans residues 284–287; sequence DPTG. A helical membrane pass occupies residues 288–308; the sequence is AILLAIYTIVNWSGTVMENAV. Topologically, residues 309–390 are cytoplasmic; sequence SLIGQSAPPE…LPEVERAFVH (82 aa).

This sequence belongs to the cation diffusion facilitator (CDF) transporter (TC 2.A.4) family.

It is found in the vacuole membrane. Functionally, involved in sequestration of excess metal in the cytoplasm into vacuoles to maintain metal homeostasis. This Arabidopsis thaliana (Mouse-ear cress) protein is Putative metal tolerance protein C3 (MTPC3).